The chain runs to 211 residues: MTRKSVALLDYGSGNLHSAERALVRAGADVRVTADPDAALAVDGLVVPGVGAFAACMAGLRAVRGEKIIGQRLAGGRPVLGICVGMQILFERGVEFGVETEGCAEWPGVVERLDAPVLPHMGWNTVSAPADSVLFAGMDADTRFYFVHSYAAQRWELPPNEHFAAPKLTWAEHGVRFLAAVENGPLSATQFHPEKSGDAGAQLLRNWVDSL.

Positions 5 to 211 (SVALLDYGSG…QLLRNWVDSL (207 aa)) constitute a Glutamine amidotransferase type-1 domain. The active-site Nucleophile is C83. Active-site residues include H192 and E194.

Heterodimer of HisH and HisF.

The protein resides in the cytoplasm. It catalyses the reaction 5-[(5-phospho-1-deoxy-D-ribulos-1-ylimino)methylamino]-1-(5-phospho-beta-D-ribosyl)imidazole-4-carboxamide + L-glutamine = D-erythro-1-(imidazol-4-yl)glycerol 3-phosphate + 5-amino-1-(5-phospho-beta-D-ribosyl)imidazole-4-carboxamide + L-glutamate + H(+). The catalysed reaction is L-glutamine + H2O = L-glutamate + NH4(+). It participates in amino-acid biosynthesis; L-histidine biosynthesis; L-histidine from 5-phospho-alpha-D-ribose 1-diphosphate: step 5/9. In terms of biological role, IGPS catalyzes the conversion of PRFAR and glutamine to IGP, AICAR and glutamate. The HisH subunit catalyzes the hydrolysis of glutamine to glutamate and ammonia as part of the synthesis of IGP and AICAR. The resulting ammonia molecule is channeled to the active site of HisF. The chain is Imidazole glycerol phosphate synthase subunit HisH from Nocardia farcinica (strain IFM 10152).